We begin with the raw amino-acid sequence, 308 residues long: Probable peptidyl-prolyl cis-trans isomerase B (308 aa).

The interval 74–123 (DHQSTTSATPTDSASTSPPQAATAPPLPPFKPSANLGANCQYPPSPDKAV) is disordered. The segment covering 77–97 (STTSATPTDSASTSPPQAATA) has biased composition (low complexity). In terms of domain architecture, PPIase cyclophilin-type spans 139 to 307 (AQVSVSMVTN…TEVTITSVLL (169 aa)).

Belongs to the cyclophilin-type PPIase family.

It carries out the reaction [protein]-peptidylproline (omega=180) = [protein]-peptidylproline (omega=0). Functionally, PPIases accelerate the folding of proteins. It catalyzes the cis-trans isomerization of proline imidic peptide bonds in oligopeptides. In Mycobacterium tuberculosis (strain CDC 1551 / Oshkosh), this protein is Probable peptidyl-prolyl cis-trans isomerase B (ppiB).